A 576-amino-acid polypeptide reads, in one-letter code: Dihydroxy-acid dehydratase (576 aa).

Cys-56 is a [2Fe-2S] cluster binding site. Asp-88 contacts Mg(2+). Cys-129 is a [2Fe-2S] cluster binding site. Positions 130 and 131 each coordinate Mg(2+). Lys-131 is modified (N6-carboxylysine). Residue Cys-201 coordinates [2Fe-2S] cluster. Glu-453 is a binding site for Mg(2+). The Proton acceptor role is filled by Ser-479.

This sequence belongs to the IlvD/Edd family. As to quaternary structure, homodimer. The cofactor is [2Fe-2S] cluster. Mg(2+) is required as a cofactor.

It catalyses the reaction (2R)-2,3-dihydroxy-3-methylbutanoate = 3-methyl-2-oxobutanoate + H2O. The enzyme catalyses (2R,3R)-2,3-dihydroxy-3-methylpentanoate = (S)-3-methyl-2-oxopentanoate + H2O. The protein operates within amino-acid biosynthesis; L-isoleucine biosynthesis; L-isoleucine from 2-oxobutanoate: step 3/4. Its pathway is amino-acid biosynthesis; L-valine biosynthesis; L-valine from pyruvate: step 3/4. Functions in the biosynthesis of branched-chain amino acids. Catalyzes the dehydration of (2R,3R)-2,3-dihydroxy-3-methylpentanoate (2,3-dihydroxy-3-methylvalerate) into 2-oxo-3-methylpentanoate (2-oxo-3-methylvalerate) and of (2R)-2,3-dihydroxy-3-methylbutanoate (2,3-dihydroxyisovalerate) into 2-oxo-3-methylbutanoate (2-oxoisovalerate), the penultimate precursor to L-isoleucine and L-valine, respectively. This chain is Dihydroxy-acid dehydratase, found in Parvibaculum lavamentivorans (strain DS-1 / DSM 13023 / NCIMB 13966).